We begin with the raw amino-acid sequence, 388 residues long: Succinate--CoA ligase [ADP-forming] subunit beta (388 aa).

One can recognise an ATP-grasp domain in the interval 9–244 (KQLFARYGLP…QSQEDPREAQ (236 aa)). ATP-binding positions include K46, 53-55 (GRG), E99, T102, and E107. Mg(2+)-binding residues include N199 and D213. Substrate contacts are provided by residues N264 and 321–323 (GIV).

Belongs to the succinate/malate CoA ligase beta subunit family. In terms of assembly, heterotetramer of two alpha and two beta subunits. The cofactor is Mg(2+).

It carries out the reaction succinate + ATP + CoA = succinyl-CoA + ADP + phosphate. The catalysed reaction is GTP + succinate + CoA = succinyl-CoA + GDP + phosphate. It participates in carbohydrate metabolism; tricarboxylic acid cycle; succinate from succinyl-CoA (ligase route): step 1/1. In terms of biological role, succinyl-CoA synthetase functions in the citric acid cycle (TCA), coupling the hydrolysis of succinyl-CoA to the synthesis of either ATP or GTP and thus represents the only step of substrate-level phosphorylation in the TCA. The beta subunit provides nucleotide specificity of the enzyme and binds the substrate succinate, while the binding sites for coenzyme A and phosphate are found in the alpha subunit. This is Succinate--CoA ligase [ADP-forming] subunit beta from Shigella boydii serotype 18 (strain CDC 3083-94 / BS512).